A 70-amino-acid polypeptide reads, in one-letter code: PPF2L antigen (70 aa).

The protein is PPF2L antigen of Plasmodium falciparum (isolate Palo Alto / Uganda).